The sequence spans 163 residues: MAETKKMIILKSSDGESFEVEEAVAVESQTIKHMIEDDCVDNGIPLPNVTGAILAKVIEYCKKHVEAAAEAGGDKDFYGSTENHELKTWDNDFVKVDHPTLFDLLRAANYLNISGLLDLTCKAVADQMRGKTPAQMREHFNIKNDYTPEEEAEVRNENRWAFE.

Residues Leu105 to Glu163 form an interaction with the F-box domain of F-box proteins region.

Belongs to the SKP1 family. In terms of assembly, part of a SCF (SKP1-cullin-F-box) protein ligase complex. Interacts with ADO3/FKF1 and At3g61590. As to expression, highly expressed in siliques.

The protein localises to the nucleus. It participates in protein modification; protein ubiquitination. Functionally, involved in ubiquitination and subsequent proteasomal degradation of target proteins. Together with CUL1, RBX1 and a F-box protein, it forms a SCF E3 ubiquitin ligase complex. The functional specificity of this complex depends on the type of F-box protein. In the SCF complex, it serves as an adapter that links the F-box protein to CUL1. In Arabidopsis thaliana (Mouse-ear cress), this protein is SKP1-like protein 3 (ASK3).